Consider the following 167-residue polypeptide: MTNNSERKRLEKRIAQLCKFIGRSPWVFHVNSGSCNGCDIEIIAALTPRYDAERFGVKLVGSPRHADILLVTGPVTNQSLERVKLVYEQTPDPKIVIAIGACPTGGSVFYESPFTNAPLDRIIPVDVFVPGCPPRPEAILHGVVLALEKLAKMIKGEVPPEEGEENE.

[4Fe-4S] cluster is bound by residues Cys-35, Cys-38, Cys-102, and Cys-132.

It belongs to the complex I 20 kDa subunit family. As to quaternary structure, the membrane-bound hydrogenase complex is composed of MbhK and MbhL, but may also contain MbhJ. It depends on [4Fe-4S] cluster as a cofactor.

The protein resides in the cell membrane. The enzyme catalyses H2 + 2 oxidized [2Fe-2S]-[ferredoxin] = 2 reduced [2Fe-2S]-[ferredoxin] + 2 H(+). Its activity is regulated as follows. Inhibited by 0.1 mM Cu(2+). Functionally, probable subunit of a hydrogen-evolving hydrogenase that utilizes protons both as a substrate for hydrogen production and proton translocation. Acts by coupling the redox reaction via ferredoxin and iron-sulfur (Fe-S) clusters to proton translocation across the membrane, thereby conserving the redox energy in a proton gradient. In Pyrococcus furiosus (strain ATCC 43587 / DSM 3638 / JCM 8422 / Vc1), this protein is Probable membrane-bound hydrogenase subunit mbhJ.